The primary structure comprises 298 residues: Ribosomal RNA small subunit methyltransferase A (298 aa).

Residues N30, V32, G57, E78, D108, and N126 each coordinate S-adenosyl-L-methionine.

It belongs to the class I-like SAM-binding methyltransferase superfamily. rRNA adenine N(6)-methyltransferase family. RsmA subfamily.

The protein localises to the cytoplasm. The enzyme catalyses adenosine(1518)/adenosine(1519) in 16S rRNA + 4 S-adenosyl-L-methionine = N(6)-dimethyladenosine(1518)/N(6)-dimethyladenosine(1519) in 16S rRNA + 4 S-adenosyl-L-homocysteine + 4 H(+). Specifically dimethylates two adjacent adenosines (A1518 and A1519) in the loop of a conserved hairpin near the 3'-end of 16S rRNA in the 30S particle. May play a critical role in biogenesis of 30S subunits. The polypeptide is Ribosomal RNA small subunit methyltransferase A (Cutibacterium acnes (strain DSM 16379 / KPA171202) (Propionibacterium acnes)).